The following is a 504-amino-acid chain: Arabinose import ATP-binding protein AraG (504 aa).

2 consecutive ABC transporter domains span residues 8–243 (LSFR…MVGR) and 256–499 (YGEE…MPKV). 40–47 (GENGAGKS) is an ATP binding site.

Belongs to the ABC transporter superfamily. Arabinose importer (TC 3.A.1.2.2) family. As to quaternary structure, the complex is composed of two ATP-binding proteins (AraG), two transmembrane proteins (AraH) and a solute-binding protein (AraF).

Its subcellular location is the cell inner membrane. It carries out the reaction L-arabinose(out) + ATP + H2O = L-arabinose(in) + ADP + phosphate + H(+). Part of the ABC transporter complex AraFGH involved in arabinose import. Responsible for energy coupling to the transport system. The protein is Arabinose import ATP-binding protein AraG of Escherichia coli O6:K15:H31 (strain 536 / UPEC).